Here is a 170-residue protein sequence, read N- to C-terminus: M-agglutinin (170 aa).

The first 24 residues, 1–24 (MNLKKIAIASSVFAGITMALTCHA), serve as a signal peptide directing secretion.

This protein is a non-fimbrial hemagglutinin that is specific for blood group M. This is M-agglutinin (bmaE) from Escherichia coli.